Reading from the N-terminus, the 436-residue chain is MDDLSKLLFFLLLTISITTALPDKPGSGQINSNSVLVALLDSHYTELAELVEKALLLQTLEEAVGQHNITIFAPRNDALEKNLDPEFKSFLLQPKNLKSLQSLLMFHILPKRITSPQFSSAVVSHRTLSNDHLHFTNGKVNSAEITKPDDLTRPDGIIHGIERLLIPRSVQEDFNRRRSLRSIAAVLPEGAPEVDPRTHRLKKKPAPIPAGAPPVLPVYDAMSPGPSLAPAPAPGPGGPRHHFNGEAQVKDFIHTLLHYGGYNEMADILVNLTSLATEMGRLVSEGYVLTVLAPNDEAMAKLTTDQLSEPGAPEQIMYYHIIPEYQTEESMYNSVRRFGKIRYDSLRFPHKVEAQEADGSVKFGHGDGSAYLFDPDIYTDGRISVQGIDGVLFPEEKTPVEKKTGVPVVKKAPKPRRGKLMEVACTMLGSQFPTCQ.

The N-terminal stretch at 1–20 is a signal peptide; sequence MDDLSKLLFFLLLTISITTA. 2 FAS1 domains span residues 31 to 165 and 249 to 392; these read NSNS…ERLL and VKDF…DGVL. N-linked (GlcNAc...) asparagine glycans are attached at residues asparagine 68 and asparagine 271.

This sequence belongs to the fasciclin-like AGP family.

It is found in the secreted. Functionally, may be a cell surface adhesion protein. In Arabidopsis thaliana (Mouse-ear cress), this protein is Fasciclin-like arabinogalactan protein 15 (FLA15).